A 538-amino-acid polypeptide reads, in one-letter code: CTP synthase (538 aa).

An amidoligase domain region spans residues 1–266; it reads MRTKYIFITG…DQKIVDLLNI (266 aa). CTP is bound at residue Ser14. A UTP-binding site is contributed by Ser14. ATP is bound by residues 15–20 and Asp72; that span reads SLGKGL. Positions 72 and 140 each coordinate Mg(2+). CTP-binding positions include 147-149, 187-192, and Lys223; these read DIE and KTKPTQ. Residues 187–192 and Lys223 each bind UTP; that span reads KTKPTQ. ATP is bound at residue 239 to 241; sequence KDV. One can recognise a Glutamine amidotransferase type-1 domain in the interval 291 to 533; it reads NIAIVGKYVN…IEAALRYRKK (243 aa). Residue Gly353 participates in L-glutamine binding. The Nucleophile; for glutamine hydrolysis role is filled by Cys380. L-glutamine contacts are provided by residues 381-384, Glu404, and Arg461; that span reads LGMQ. Catalysis depends on residues His506 and Glu508.

The protein belongs to the CTP synthase family. In terms of assembly, homotetramer.

It catalyses the reaction UTP + L-glutamine + ATP + H2O = CTP + L-glutamate + ADP + phosphate + 2 H(+). It carries out the reaction L-glutamine + H2O = L-glutamate + NH4(+). The enzyme catalyses UTP + NH4(+) + ATP = CTP + ADP + phosphate + 2 H(+). It functions in the pathway pyrimidine metabolism; CTP biosynthesis via de novo pathway; CTP from UDP: step 2/2. Allosterically activated by GTP, when glutamine is the substrate; GTP has no effect on the reaction when ammonia is the substrate. The allosteric effector GTP functions by stabilizing the protein conformation that binds the tetrahedral intermediate(s) formed during glutamine hydrolysis. Inhibited by the product CTP, via allosteric rather than competitive inhibition. Its function is as follows. Catalyzes the ATP-dependent amination of UTP to CTP with either L-glutamine or ammonia as the source of nitrogen. Regulates intracellular CTP levels through interactions with the four ribonucleotide triphosphates. This chain is CTP synthase, found in Syntrophus aciditrophicus (strain SB).